The sequence spans 308 residues: tRNA dimethylallyltransferase (308 aa).

10–17 (GPTASGKT) is an ATP binding site. Residue 12 to 17 (TASGKT) participates in substrate binding. 2 interaction with substrate tRNA regions span residues 35–38 (DSSL) and 159–163 (QRIFR).

This sequence belongs to the IPP transferase family. As to quaternary structure, monomer. Mg(2+) is required as a cofactor.

The catalysed reaction is adenosine(37) in tRNA + dimethylallyl diphosphate = N(6)-dimethylallyladenosine(37) in tRNA + diphosphate. Catalyzes the transfer of a dimethylallyl group onto the adenine at position 37 in tRNAs that read codons beginning with uridine, leading to the formation of N6-(dimethylallyl)adenosine (i(6)A). The polypeptide is tRNA dimethylallyltransferase (Francisella philomiragia subsp. philomiragia (strain ATCC 25017 / CCUG 19701 / FSC 153 / O#319-036)).